A 222-amino-acid chain; its full sequence is 7-cyano-7-deazaguanine synthase (222 aa).

An ATP-binding site is contributed by 8-18 (LSGGMDSTTLA). Zn(2+)-binding residues include Cys188, Cys196, Cys199, and Cys202.

It belongs to the QueC family. Requires Zn(2+) as cofactor.

The catalysed reaction is 7-carboxy-7-deazaguanine + NH4(+) + ATP = 7-cyano-7-deazaguanine + ADP + phosphate + H2O + H(+). The protein operates within purine metabolism; 7-cyano-7-deazaguanine biosynthesis. Catalyzes the ATP-dependent conversion of 7-carboxy-7-deazaguanine (CDG) to 7-cyano-7-deazaguanine (preQ(0)). The chain is 7-cyano-7-deazaguanine synthase from Methanoculleus marisnigri (strain ATCC 35101 / DSM 1498 / JR1).